Consider the following 144-residue polypeptide: Small ribosomal subunit protein eS12 (144 aa).

This sequence belongs to the eukaryotic ribosomal protein eS12 family.

In Trypanosoma brucei brucei, this protein is Small ribosomal subunit protein eS12 (RPS12).